Here is a 1216-residue protein sequence, read N- to C-terminus: MAGAQPGVHALQLKPVCVSDSLKKGTKFVKWEDDSTVVTPIILRTDPQGFFFYWTDQNKETELLDLSLVKDARCGKHAKAPKDPKLRELLDVGNIGRLEHRMITVVYGPDLVNISHLNLVAFQEEVAKEWTNEVFSLATNLLAQNMSRDAFLEKAYTKLKLQVTPEGRIPLKNIYRLFSADRKRVETALEACSLPSSRNDSIPQEDFTPEVYRVFLNNLCPRPEIDNIFSEFGAKSKPYLTVDQMMDFINLKQRDPRLNEILYPPLKQEQVQVLIEKYEPNNSLAKKGQISVDGFMRYLSGEENGVVSPEKLDLNEDMSQPLSHYFINSSHNTYLTAGQLAGNSSVEMYRQVLLSGCRCVELDCWKGRTAEEEPVITHGFTMTTEISFKEVIEAIAECAFKTSPFPILLSFENHVDSPKQQAKMAEYCRLIFGDALLMEPLDKYPLESGVPLPSPMDLMYKILVKNKKKSHKSSEGSGKKKLSEQASNTYSDSSSVFEPSSPGAGEADTESDDDDDDDDCKKSSMDEGTAGSEAMATEEMSNLVNYIQPVKFESFEISKKRNRSFEMSSFVETKGLEQLTKSPVEFVEYNKMQLSRIYPKGTRVDSSNYMPQLFWNAGCQMVALNFQTVDLAMQINMGMYEYNGKSGYRLKPEFMRRPDKHFDPFTEGIVDGIVANTLSVKIISGQFLSDKKVGTYVEVDMFGLPVDTRRKAFKTKTSQGNAVNPIWEEEPIVFKKVVLPSLACLRIAVYEEGGKFIGHRILPVQAIRPGYHYICLRNERNQPLMLPALFVYIEVKDYVPDTYADVIEALSNPIRYVNLMEQRAKQLAALTLEDEEEVKKEADPGETPSEAPSEARPTPAENGVNHTTSLTPKPPSQALHSQPAPGSVKAPAKTEDLIQSVLTEVEAQTIEELKQQKSFVKLQKKHYKEMKDLVKRHHKKTTDLIKEHTTKYNEIQNDYLRRRAALEKTAKKDNKKKSEPSSPDHVSSTIEQDLAALDAEMTQKLVDLKDKQQQQLLNLRQEQYYSEKYQKREHIKLLIQKLTDVAEECQNNQLKKLKEICEKEKKELKKKMDKKRQEKITEAKSKDKSQMEEEKTEMIRSYIQEVVQYIKRLEEAQSKRQEKLVEKHKEIRQQILDEKPKLQVELEQEYQDKFKRLPLEILEFVQEAMKGKISEDSNHSSAPPLMTSDSGKLNQKPPSSEELEGENPGKEFDTPL.

Cysteine 17 carries S-palmitoyl cysteine lipidation. Phosphoserine is present on serine 236. The PI-PLC X-box domain occupies 316-467 (EDMSQPLSHY…LMYKILVKNK (152 aa)). Residues histidine 331 and histidine 378 contribute to the active site. Position 417 is a phosphoserine (serine 417). Residues 469-534 (KSHKSSEGSG…MDEGTAGSEA (66 aa)) are disordered. The segment covering 472 to 483 (KSSEGSGKKKLS) has biased composition (basic and acidic residues). Positions 491–501 (SDSSSVFEPSS) are enriched in low complexity. Acidic residues predominate over residues 507–518 (ADTESDDDDDDD). Position 509 is a phosphothreonine (threonine 509). A phosphoserine mark is found at serine 511 and serine 582. Positions 540–656 (MSNLVNYIQP…GYRLKPEFMR (117 aa)) constitute a PI-PLC Y-box domain. The region spanning 656–784 (RRPDKHFDPF…CLRNERNQPL (129 aa)) is the C2 domain. Disordered regions lie at residues 834 to 891 (DEEE…VKAP), 933 to 993 (LVKR…IEQD), 1071 to 1095 (KMDK…EEEK), and 1172 to 1216 (KISE…DTPL). Serine 887 carries the phosphoserine; by PKC modification. Composition is skewed to basic and acidic residues over residues 941–951 (TTDLIKEHTTK) and 959–979 (YLRR…KKSE). Serine 978 and serine 987 each carry phosphoserine. The segment covering 980 to 991 (PSSPDHVSSTIE) has biased composition (polar residues). Residues 1075–1095 (KRQEKITEAKSKDKSQMEEEK) show a composition bias toward basic and acidic residues. Residues 1187–1198 (TSDSGKLNQKPP) are compositionally biased toward polar residues. Residues serine 1199 and serine 1200 each carry the phosphoserine modification. Positions 1207–1216 (NPGKEFDTPL) are enriched in basic and acidic residues.

Interacts with DGKQ. Ca(2+) serves as cofactor. Post-translationally, palmitoylated. Palmitoylation at Cys-17 by ZDHHC21 regulates the signaling activity of PLCB1 and the function of the endothelial barrier. Palmitoylation by ZDHHC21 is stimulated by inflammation.

The protein resides in the nucleus membrane. The protein localises to the cytoplasm. The enzyme catalyses a 1,2-diacyl-sn-glycero-3-phospho-(1D-myo-inositol-4,5-bisphosphate) + H2O = 1D-myo-inositol 1,4,5-trisphosphate + a 1,2-diacyl-sn-glycerol + H(+). It carries out the reaction a 1,2-diacyl-sn-glycero-3-phospho-(1D-myo-inositol) + H2O = 1D-myo-inositol 1-phosphate + a 1,2-diacyl-sn-glycerol + H(+). Functionally, catalyzes the hydrolysis of 1-phosphatidylinositol 4,5-bisphosphate into diacylglycerol (DAG) and inositol 1,4,5-trisphosphate (IP3) and mediates intracellular signaling downstream of G protein-coupled receptors. Regulates the function of the endothelial barrier. The polypeptide is 1-phosphatidylinositol 4,5-bisphosphate phosphodiesterase beta-1 (PLCB1) (Bos taurus (Bovine)).